The chain runs to 760 residues: BMP/retinoic acid-inducible neural-specific protein 1 (760 aa).

The signal sequence occupies residues 1 to 16 (MNWRFVELLYFLFVWG). The 184-residue stretch at 68 to 251 (RYKIYREFAR…FVQSALSYIM (184 aa)) folds into the MACPF domain. N-linked (GlcNAc...) asparagine glycosylation is found at asparagine 156, asparagine 433, asparagine 443, asparagine 553, asparagine 599, asparagine 630, and asparagine 676.

Belongs to the BRINP family. As to expression, expressed in brain. Expressed in GABAergic neurons of the pre-frontal cortex. Weakly expressed in embryonic stem (ES) cells and in ES-derived neural stem cells (NSCs).

The protein localises to the cytoplasm. In terms of biological role, plays a role in neurogenesis, brain development, and the functioning of GABAergic neurons. May suppress cell cycle progression in postmitotic neurons by inhibiting G1/S transition. The chain is BMP/retinoic acid-inducible neural-specific protein 1 (Brinp1) from Mus musculus (Mouse).